We begin with the raw amino-acid sequence, 635 residues long: Chaperone protein DnaK (635 aa).

Position 198 is a phosphothreonine; by autocatalysis (threonine 198). Positions 598–635 (YAKAQPGEEQAGGAPHEGEAKDEKVVDADFEEVKEDKK) are disordered. The span at 613–624 (HEGEAKDEKVVD) shows a compositional bias: basic and acidic residues. Acidic residues predominate over residues 625–635 (ADFEEVKEDKK).

Belongs to the heat shock protein 70 family.

Its function is as follows. Acts as a chaperone. The protein is Chaperone protein DnaK of Geotalea uraniireducens (strain Rf4) (Geobacter uraniireducens).